Consider the following 699-residue polypeptide: Elongation factor G (699 aa).

The tr-type G domain maps to 10–292; it reads DRTRNIGIMA…AVIDYLPSPT (283 aa). GTP contacts are provided by residues 19-26, 90-94, and 144-147; these read AHIDAGKT, DTPGH, and NKMD.

Belongs to the TRAFAC class translation factor GTPase superfamily. Classic translation factor GTPase family. EF-G/EF-2 subfamily.

It localises to the cytoplasm. Functionally, catalyzes the GTP-dependent ribosomal translocation step during translation elongation. During this step, the ribosome changes from the pre-translocational (PRE) to the post-translocational (POST) state as the newly formed A-site-bound peptidyl-tRNA and P-site-bound deacylated tRNA move to the P and E sites, respectively. Catalyzes the coordinated movement of the two tRNA molecules, the mRNA and conformational changes in the ribosome. This is Elongation factor G from Coxiella burnetii (strain Dugway 5J108-111).